A 306-amino-acid polypeptide reads, in one-letter code: Glutathione transport system permease protein GsiC (306 aa).

Residues 1 to 8 (MLNYVIKR) lie on the Cytoplasmic side of the membrane. The chain crosses the membrane as a helical span at residues 9 to 29 (LLGLIPTLFIVSVLVFLFVHM). At 30-102 (LPGDPARLIA…SRFMPTLWLT (73 aa)) the chain is on the periplasmic side. An ABC transmembrane type-1 domain is found at 95–292 (FMPTLWLTIT…LEFILINLVV (198 aa)). Residues 103-123 (ITSMVWAVIFGMAAGIIAAVW) form a helical membrane-spanning segment. Over 124–134 (RNRWPDRLSMT) the chain is Cytoplasmic. Residues 135–155 (IAVSGISFPAFALGMLLIQVF) form a helical membrane-spanning segment. Over 156-168 (SVELGWLPTVGAD) the chain is Periplasmic. A helical transmembrane segment spans residues 169–189 (SWQHYILSSLTLGAAVAAVMA). At 190–228 (RFTRASFVDVLSEDYMRTARAKGVSETWVVLKHGLRNAM) the chain is on the cytoplasmic side. The chain crosses the membrane as a helical span at residues 229–249 (IPVVTMMGLQFGFLLGGSIVV). The Periplasmic segment spans residues 250 to 277 (EKVFNWPGLGRLLVDSVEMRDYPVIQAE). The chain crosses the membrane as a helical span at residues 278 to 298 (ILLFSLEFILINLVVDVLYAA). Over 299–306 (INPAIRYK) the chain is Cytoplasmic.

Belongs to the binding-protein-dependent transport system permease family. As to quaternary structure, the complex is composed of two ATP-binding proteins (GsiA), two transmembrane proteins (GsiC and GsiD) and a solute-binding protein (GsiB).

The protein localises to the cell inner membrane. Part of the ABC transporter complex GsiABCD involved in glutathione import. Probably responsible for the translocation of the substrate across the membrane. This chain is Glutathione transport system permease protein GsiC, found in Shigella boydii serotype 4 (strain Sb227).